The following is a 44-amino-acid chain: SGVGDGVDVVSAIEGAAGPIAAIGGAVLTVMVGIKVYKWVRRAM.

N-acetylserine; by host is present on S1. The Periplasmic portion of the chain corresponds to 1–19; that stretch reads SGVGDGVDVVSAIEGAAGP. A helical transmembrane segment spans residues 20–37; it reads IAAIGGAVLTVMVGIKVY. Over 38-44 the chain is Cytoplasmic; the sequence is KWVRRAM.

This sequence belongs to the inovirus capsid protein family. As to quaternary structure, homomultimerizes. There are several thousands of this protein in the phage capsid.

It is found in the virion. The protein resides in the host membrane. Self assembles to form a helical capsid wrapping up the viral genomic DNA. The capsid displays a filamentous structure with a length of 760-1950 nm and a width of 6-8 nm. The virion assembly and budding take place at the host inner membrane. The protein is Capsid protein G8P (VIII) of Xanthomonas campestris pv. oryzae (Bacteriophage Xf).